A 380-amino-acid chain; its full sequence is Succinate--CoA ligase [ADP-forming] subunit beta (380 aa).

The 228-residue stretch at 9–236 folds into the ATP-grasp domain; it reads KGVFADAGIP…EAAGDELEAK (228 aa). ATP-binding positions include lysine 45, 52–54, glutamate 91, valine 94, and glutamate 99; that span reads GRG. Asparagine 191 and aspartate 205 together coordinate Mg(2+). Residues asparagine 256 and 313–315 each bind substrate; that span reads GIT.

The protein belongs to the succinate/malate CoA ligase beta subunit family. Heterotetramer of two alpha and two beta subunits. It depends on Mg(2+) as a cofactor.

The enzyme catalyses succinate + ATP + CoA = succinyl-CoA + ADP + phosphate. It carries out the reaction GTP + succinate + CoA = succinyl-CoA + GDP + phosphate. The protein operates within carbohydrate metabolism; tricarboxylic acid cycle; succinate from succinyl-CoA (ligase route): step 1/1. In terms of biological role, succinyl-CoA synthetase functions in the citric acid cycle (TCA), coupling the hydrolysis of succinyl-CoA to the synthesis of either ATP or GTP and thus represents the only step of substrate-level phosphorylation in the TCA. The beta subunit provides nucleotide specificity of the enzyme and binds the substrate succinate, while the binding sites for coenzyme A and phosphate are found in the alpha subunit. This chain is Succinate--CoA ligase [ADP-forming] subunit beta, found in Natronomonas pharaonis (strain ATCC 35678 / DSM 2160 / CIP 103997 / JCM 8858 / NBRC 14720 / NCIMB 2260 / Gabara) (Halobacterium pharaonis).